We begin with the raw amino-acid sequence, 134 residues long: Translation initiation factor 2 subunit beta (134 aa).

This sequence belongs to the eIF-2-beta/eIF-5 family. As to quaternary structure, heterotrimer composed of an alpha, a beta and a gamma chain.

EIF-2 functions in the early steps of protein synthesis by forming a ternary complex with GTP and initiator tRNA. The protein is Translation initiation factor 2 subunit beta of Pyrobaculum neutrophilum (strain DSM 2338 / JCM 9278 / NBRC 100436 / V24Sta) (Thermoproteus neutrophilus).